Reading from the N-terminus, the 367-residue chain is Germination protease (367 aa).

The propeptide occupies methionine 1 to aspartate 15.

This sequence belongs to the peptidase A25 family. In terms of assembly, homotetramer. Post-translationally, autoproteolytically processed. The inactive tetrameric zymogen termed p46 autoprocesses to a smaller form termed p41, which is active only during spore germination.

The catalysed reaction is Endopeptidase action with P4 Glu or Asp, P1 preferably Glu &gt; Asp, P1' hydrophobic and P2' Ala.. Its function is as follows. Initiates the rapid degradation of small, acid-soluble proteins during spore germination. This Bacillus cereus (strain G9842) protein is Germination protease.